Reading from the N-terminus, the 1063-residue chain is Alkane uptake protein B (1063 aa).

Positions 1 to 17 (MKYNKTLALIPAILLAA) are cleaved as a signal peptide. The N-palmitoyl cysteine moiety is linked to residue Cys18. Cys18 is lipidated: S-diacylglycerol cysteine.

As to quaternary structure, interacts with the outer membrane protein AupA.

The protein resides in the cell inner membrane. In terms of biological role, required for growth on alkanes. Probably involved in the uptake of micelle-solubilized alkanes. May facilitate the transfer of alkanes from the outer membrane to the inner membrane. This Marinobacter nauticus (strain ATCC 49840 / DSM 8798 / CIP 103578 / SP17) (Marinobacter hydrocarbonoclasticus) protein is Alkane uptake protein B.